The sequence spans 427 residues: uncharacterized protein (427 aa).

Positions 135–168 (PILKQKLVSLESKVKKIDKEMEKHNDLLKEIQEN) form a coiled coil.

This is an uncharacterized protein from Arabidopsis thaliana (Mouse-ear cress).